We begin with the raw amino-acid sequence, 352 residues long: PDZ and LIM domain protein 2 (352 aa).

Residues 1–84 (MALTVDVAGP…PLRLQLDRSQ (84 aa)) form the PDZ domain. 2 disordered regions span residues 67–97 (SKIRQSPSPLRLQLDRSQATSPGQTNGDSSL) and 111–149 (YTESQSSLRSSYSSPTSLSPRAGSPFSPPPSSSSLTGEA). Over residues 81–95 (DRSQATSPGQTNGDS) the composition is skewed to polar residues. Positions 111–135 (YTESQSSLRSSYSSPTSLSPRAGSP) are enriched in low complexity. A Phosphoserine modification is found at Ser124. Residue Thr126 is modified to Phosphothreonine. 10 positions are modified to phosphoserine: Ser127, Ser129, Ser134, Ser137, Ser143, Ser161, Ser197, Ser203, Ser213, and Ser266. Residues 170–213 (LSYSGRPGSRQAGLGRAGDSAVLVLPPSPGPRSSRPSMDSEGGS) are disordered. An LIM zinc-binding domain is found at 284-344 (HTCEKCSTSI…EKHARQRYSA (61 aa)).

As to quaternary structure, interacts with alpha-actinins ACTN1 and ACTN4, FLNA and MYH9. Interacts (via LIM zinc-binding domain) with MKRN2.

It localises to the cytoplasm. Its subcellular location is the nucleus. It is found in the cytoskeleton. Functionally, probable adapter protein located at the actin cytoskeleton that promotes cell attachment. Necessary for the migratory capacity of epithelial cells. Overexpression enhances cell adhesion to collagen and fibronectin and suppresses anchorage independent growth. May contribute to tumor cell migratory capacity. The chain is PDZ and LIM domain protein 2 (PDLIM2) from Homo sapiens (Human).